The chain runs to 160 residues: Lipoprotein signal peptidase (160 aa).

Helical transmembrane passes span 7-27, 39-59, 62-82, and 96-116; these read WFWLVAIIGLGLDQLTKYITV, LWPGVFHLTYVINTGAAFSFF, GAVWLRWLSLAVSLGLIFLGW, and GFILAGALGNGIDRFLFGYVV. Catalysis depends on residues D117 and D133. A helical transmembrane segment spans residues 126-146; that stretch reads FPVFNLADTFINIGIFFLLLA.

This sequence belongs to the peptidase A8 family.

It localises to the cell inner membrane. The catalysed reaction is Release of signal peptides from bacterial membrane prolipoproteins. Hydrolyzes -Xaa-Yaa-Zaa-|-(S,diacylglyceryl)Cys-, in which Xaa is hydrophobic (preferably Leu), and Yaa (Ala or Ser) and Zaa (Gly or Ala) have small, neutral side chains.. It participates in protein modification; lipoprotein biosynthesis (signal peptide cleavage). In terms of biological role, this protein specifically catalyzes the removal of signal peptides from prolipoproteins. The polypeptide is Lipoprotein signal peptidase (Gloeothece citriformis (strain PCC 7424) (Cyanothece sp. (strain PCC 7424))).